Reading from the N-terminus, the 488-residue chain is Histamine H1 receptor (488 aa).

Residues 1-38 lie on the Extracellular side of the membrane; that stretch reads MSFLPGMTPVTLSNFSWALEDRMLEGNSTTTPTRQLMP. Residues Asn14 and Asn27 are each glycosylated (N-linked (GlcNAc...) asparagine). A helical membrane pass occupies residues 39-59; sequence LVVVLSSVSLVTVALNLLVLY. Topologically, residues 60–73 are cytoplasmic; the sequence is AVRSERKLHTVGNL. The chain crosses the membrane as a helical span at residues 74-98; the sequence is YIVSLSVADLIVGAVVMPMSILYLH. The Extracellular segment spans residues 99–106; the sequence is RSAWILGR. The chain crosses the membrane as a helical span at residues 107-132; the sequence is PLCLFWLSMDYVASTASIFSVFILCI. Cys109 and Cys189 are joined by a disulfide. Histamine-binding residues include Asp116 and Thr121. The important for agonist binding stretch occupies residues 116–121; the sequence is DYVAST. Residues 133–153 are Cytoplasmic-facing; the sequence is DRYRSVQQPLRYLRYRTKTRA. Phosphothreonine occurs at positions 149 and 151. Residues 154–173 traverse the membrane as a helical segment; the sequence is SATILGAWLLSFLWVIPILG. Over 174–197 the chain is Extracellular; sequence WHHFMAPTSEPREKKCETDFYDVT. A helical membrane pass occupies residues 198 to 220; the sequence is WFKVMTAIINFYLPTLLMLWFYI. Asn207 is a histamine binding site. The Cytoplasmic segment spans residues 221–417; the sequence is RIYKAVRRHC…LNRERKAAKQ (197 aa). Ser239 is subject to Phosphoserine. A compositionally biased stretch (basic and acidic residues) spans 259-274; that stretch reads RMGKESPWEDPKRCSK. The segment at 259 to 285 is disordered; it reads RMGKESPWEDPKRCSKDASGVHTPMPS. Phosphoserine occurs at positions 345, 381, 383, 397, and 399. The chain crosses the membrane as a helical span at residues 418-441; the sequence is LGCIMAAFILCWIPYFVFFMVIAF. Residues 425–429 are important for agonist binding; sequence FILCW. Tyr432 contributes to the histamine binding site. A disulfide bridge connects residues Cys442 and Cys445. Topologically, residues 442-447 are extracellular; it reads CKSCSN. The helical transmembrane segment at 448–470 threads the bilayer; that stretch reads EPVHMFTIWLGYLNSTLNPLIYP. Topologically, residues 471-488 are cytoplasmic; it reads LCNENFRKTFKRILRIPP.

Belongs to the G-protein coupled receptor 1 family. Post-translationally, phosphorylation at sites in the second and third cytoplasmic loops independently contribute to agonist-induced receptor down-regulation.

The protein localises to the cell membrane. Functionally, G-protein-coupled receptor for histamine, a biogenic amine that functions as an immune modulator and a neurotransmitter. Through the H1 receptor, histamine mediates the contraction of smooth muscles and increases capillary permeability due to contraction of terminal venules. Also mediates neurotransmission in the central nervous system and thereby regulates circadian rhythms, emotional and locomotor activities as well as cognitive functions. In Cavia porcellus (Guinea pig), this protein is Histamine H1 receptor.